Reading from the N-terminus, the 345-residue chain is UDP-3-O-acylglucosamine N-acyltransferase 3 (345 aa).

Catalysis depends on histidine 236, which acts as the Proton acceptor.

This sequence belongs to the transferase hexapeptide repeat family. LpxD subfamily. As to quaternary structure, homotrimer.

The enzyme catalyses a UDP-3-O-[(3R)-3-hydroxyacyl]-alpha-D-glucosamine + a (3R)-hydroxyacyl-[ACP] = a UDP-2-N,3-O-bis[(3R)-3-hydroxyacyl]-alpha-D-glucosamine + holo-[ACP] + H(+). It participates in bacterial outer membrane biogenesis; LPS lipid A biosynthesis. Catalyzes the N-acylation of UDP-3-O-acylglucosamine using 3-hydroxyacyl-ACP as the acyl donor. Is involved in the biosynthesis of lipid A, a phosphorylated glycolipid that anchors the lipopolysaccharide to the outer membrane of the cell. This chain is UDP-3-O-acylglucosamine N-acyltransferase 3, found in Gloeobacter violaceus (strain ATCC 29082 / PCC 7421).